Here is a 572-residue protein sequence, read N- to C-terminus: Urease subunit alpha (572 aa).

A Urease domain is found at 133–572; it reads GGIDLHVHYI…TSLSQRYFLF (440 aa). Residues H138, H140, and K221 each contribute to the Ni(2+) site. Position 221 is an N6-carboxylysine (K221). H223 provides a ligand contact to substrate. Ni(2+) contacts are provided by H250 and H276. H324 acts as the Proton donor in catalysis. A Ni(2+)-binding site is contributed by D364.

It belongs to the metallo-dependent hydrolases superfamily. Urease alpha subunit family. Heterotrimer of UreA (gamma), UreB (beta) and UreC (alpha) subunits. Three heterotrimers associate to form the active enzyme. It depends on Ni cation as a cofactor. In terms of processing, carboxylation allows a single lysine to coordinate two nickel ions.

Its subcellular location is the cytoplasm. It carries out the reaction urea + 2 H2O + H(+) = hydrogencarbonate + 2 NH4(+). The protein operates within nitrogen metabolism; urea degradation; CO(2) and NH(3) from urea (urease route): step 1/1. Its function is as follows. Ureolysis may allow urea to be employed as a nitrogen source for growth and produces ammonia which may protect from killing at low pH. The chain is Urease subunit alpha from Streptococcus salivarius (strain 57.I).